Here is a 244-residue protein sequence, read N- to C-terminus: 3-deoxy-manno-octulosonate cytidylyltransferase (244 aa).

This sequence belongs to the KdsB family.

It localises to the cytoplasm. It catalyses the reaction 3-deoxy-alpha-D-manno-oct-2-ulosonate + CTP = CMP-3-deoxy-beta-D-manno-octulosonate + diphosphate. It functions in the pathway nucleotide-sugar biosynthesis; CMP-3-deoxy-D-manno-octulosonate biosynthesis; CMP-3-deoxy-D-manno-octulosonate from 3-deoxy-D-manno-octulosonate and CTP: step 1/1. Its pathway is bacterial outer membrane biogenesis; lipopolysaccharide biosynthesis. Activates KDO (a required 8-carbon sugar) for incorporation into bacterial lipopolysaccharide in Gram-negative bacteria. In Wolinella succinogenes (strain ATCC 29543 / DSM 1740 / CCUG 13145 / JCM 31913 / LMG 7466 / NCTC 11488 / FDC 602W) (Vibrio succinogenes), this protein is 3-deoxy-manno-octulosonate cytidylyltransferase.